Reading from the N-terminus, the 170-residue chain is Orotate phosphoribosyltransferase (170 aa).

Residues Arg86, Lys87, Lys90, His92, and 111-119 (EDVTTSGGS) contribute to the 5-phospho-alpha-D-ribose 1-diphosphate site. Residues Thr115 and Arg143 each contribute to the orotate site.

Belongs to the purine/pyrimidine phosphoribosyltransferase family. PyrE subfamily. In terms of assembly, homodimer. The cofactor is Mg(2+).

It carries out the reaction orotidine 5'-phosphate + diphosphate = orotate + 5-phospho-alpha-D-ribose 1-diphosphate. Its pathway is pyrimidine metabolism; UMP biosynthesis via de novo pathway; UMP from orotate: step 1/2. In terms of biological role, catalyzes the transfer of a ribosyl phosphate group from 5-phosphoribose 1-diphosphate to orotate, leading to the formation of orotidine monophosphate (OMP). The chain is Orotate phosphoribosyltransferase from Methanoculleus marisnigri (strain ATCC 35101 / DSM 1498 / JR1).